We begin with the raw amino-acid sequence, 1133 residues long: Protein TOPLESS-RELATED PROTEIN 2 (1133 aa).

The LisH domain maps to 4–36 (LSRELVFLILQFLDEEKFKETVHKLEQESAFYF). The 59-residue stretch at 34–92 (FYFNMKHFEDLVQGGEWDEVEKYLSGFTKVEDNRYSMKIFFEIRKQKYLEALDRHDRAK) folds into the CTLH domain. WD repeat units follow at residues 344–384 (NQGS…RIAH), 451–492 (AHIG…KQYT), 495–536 (GHEA…SRVD), 539–582 (APGH…IKRT), 586–625 (FRKR…ILTT), 630–669 (GGLP…RLLR), 771–810 (ATSS…RNPN), 838–876 (NPEE…VMTT), 879–919 (APPP…VKSK), 922–961 (GHSK…KKKS), 970–1011 (RSGA…RSWS), and 1015–1054 (ALPA…LRCR). Residues 1102–1133 (DSDPKWGVAPPQDNGTHPTISAAPAAANKPEV) are disordered.

As to quaternary structure, tetramer. Interacts with D53, probably via the EAR motifs. Binds to AP2-1/TOE1, AP2-3/SNB and AP2-2/IDS1. Interacts with WOX1. Interacts with MOF1. Expressed in stems and panicles. Detected in roots, seeds, leaves and sheath. Expressed in the meristem and lateral organ primordia.

Its subcellular location is the nucleus. Functionally, transcriptional corepressor involved in branch formation regulation, presumably by suppressing primary branch formation and promoting secondary branch formation. Required for the cell elongation in the first internode and pollen development. Probable downstream regulator of strigolactones signaling important in axillary meristem maintenance. Acts in auxin signaling and is associated with the regulation of histone deacetylation. Essential for the function of miR172 microRNA and its target genes in regulating panicle development. This chain is Protein TOPLESS-RELATED PROTEIN 2, found in Oryza sativa subsp. japonica (Rice).